A 783-amino-acid polypeptide reads, in one-letter code: Mitochondrial intermediate peptidase (783 aa).

A mitochondrion-targeting transit peptide spans 1–33 (MKAGIPLSRCTQRIPLLVARQVSRNITTTTTKF). H565 lines the Zn(2+) pocket. E566 is an active-site residue. Zn(2+) contacts are provided by H569 and H572.

It belongs to the peptidase M3 family. Zn(2+) is required as a cofactor.

The protein resides in the mitochondrion matrix. It catalyses the reaction Release of an N-terminal octapeptide as second stage of processing of some proteins imported into the mitochondrion.. Its function is as follows. Cleaves proteins, imported into the mitochondrion, to their mature size. While most mitochondrial precursor proteins are processed to the mature form in one step by mitochondrial processing peptidase (MPP), the sequential cleavage by MIP of an octapeptide after initial processing by MPP is a required step for a subgroup of nuclear-encoded precursor proteins destined for the matrix or the inner membrane. In Candida albicans (strain SC5314 / ATCC MYA-2876) (Yeast), this protein is Mitochondrial intermediate peptidase (OCT1).